The chain runs to 445 residues: Phosphoglucosamine mutase (445 aa).

Catalysis depends on Ser-101, which acts as the Phosphoserine intermediate. Mg(2+)-binding residues include Ser-101, Asp-240, Asp-242, and Asp-244. A Phosphoserine modification is found at Ser-101.

The protein belongs to the phosphohexose mutase family. Mg(2+) is required as a cofactor. In terms of processing, activated by phosphorylation.

The enzyme catalyses alpha-D-glucosamine 1-phosphate = D-glucosamine 6-phosphate. Catalyzes the conversion of glucosamine-6-phosphate to glucosamine-1-phosphate. This Pseudomonas fluorescens (strain SBW25) protein is Phosphoglucosamine mutase.